We begin with the raw amino-acid sequence, 584 residues long: MKERLISLIESALDTLITDGTLPADAKRPVQIDRTRDKSHGDFATNIALMLAKPAGMKPRDLAEKLIAALPNDSAVAKVDIAGPGFINFFQADDWLTGLLDSALADDFLGISRPEQPQTVVVDYSSPNLAKEMHVGHLRSTIIGDAVVRTLEFLGHTVIRQNHVGDWGTQFGMLLAYLEEQKTEEGERELSRELANLETFYRAAKQRFDESDSFADRARALVVKLQSGDDYCLTLWAEFNQVSLSHCQAIYDRLGVSLTPADVHGESAYNDDLAQVVADLDSKGLLSESQGAQCVFMDAFKNKEGEPLPVIVRKADGGYLYATSDLAALRYRASTLRADRMLYFVDQRQALHFQQMFTLAKLAGFVPEQTELAHMGFGTMNGPDGRPFKTRDGGTVKLVDLLDEAEQRAFALVQEKNPQLDDEELRNIARSVGIGAVKYADLSKNRSSDYIFNFEQMLSFEGNTAPYLLYAYTRVASVFRKAELDMANVSGDFLLNEDAEHTLAARLVQFGEVLQNVADKGQPHLLSAYLYDVAGLFSSFYEHCPILSSEDERIRQSRLKLAALTARTLKHGMELLGLSPLERM.

The 'HIGH' region motif lies at Pro127–His137.

It belongs to the class-I aminoacyl-tRNA synthetase family. Monomer.

The protein resides in the cytoplasm. The catalysed reaction is tRNA(Arg) + L-arginine + ATP = L-arginyl-tRNA(Arg) + AMP + diphosphate. The sequence is that of Arginine--tRNA ligase from Alcanivorax borkumensis (strain ATCC 700651 / DSM 11573 / NCIMB 13689 / SK2).